The following is a 261-amino-acid chain: Cytochrome c oxidase subunit 3 (261 aa).

Topologically, residues 1–15 (MTHQTHAYHMVNPSP) are mitochondrial matrix. A helical transmembrane segment spans residues 16–34 (WPLTGALSALLMTSGLAMW). The Mitochondrial intermembrane portion of the chain corresponds to 35–40 (FHFNST). A helical transmembrane segment spans residues 41–66 (LLLALGLLTNILTMYQWWRDIIREST). Residues 67–72 (FQGHHT) lie on the Mitochondrial matrix side of the membrane. A helical transmembrane segment spans residues 73–105 (SIVQKGLRYGMILFIISEVFFFSGFFWAFYHSS). Residues 106-128 (LAPTPELGGCWPPTGIHPLNPLE) are Mitochondrial intermembrane-facing. A helical membrane pass occupies residues 129-152 (VPLLNTSVLLASGVSITWAHHSLM). The Mitochondrial matrix portion of the chain corresponds to 153–155 (EGN). The helical transmembrane segment at 156–183 (RKNMLQGLFITISLGVYFTLLQASEYYE) threads the bilayer. At 184–190 (ASFTISD) the chain is on the mitochondrial intermembrane side. A helical membrane pass occupies residues 191–223 (GVYGSTFFVATGFHGLHVIIGSTFLIVCFLRQL). At 224–232 (KFHFTSSHH) the chain is on the mitochondrial matrix side. The helical transmembrane segment at 233–256 (FGFEAAAWYWHFVDVVWLFLYVSI) threads the bilayer. Residues 257 to 261 (YWWGS) lie on the Mitochondrial intermembrane side of the membrane.

The protein belongs to the cytochrome c oxidase subunit 3 family. In terms of assembly, component of the cytochrome c oxidase (complex IV, CIV), a multisubunit enzyme composed of 14 subunits. The complex is composed of a catalytic core of 3 subunits MT-CO1, MT-CO2 and MT-CO3, encoded in the mitochondrial DNA, and 11 supernumerary subunits COX4I, COX5A, COX5B, COX6A, COX6B, COX6C, COX7A, COX7B, COX7C, COX8 and NDUFA4, which are encoded in the nuclear genome. The complex exists as a monomer or a dimer and forms supercomplexes (SCs) in the inner mitochondrial membrane with NADH-ubiquinone oxidoreductase (complex I, CI) and ubiquinol-cytochrome c oxidoreductase (cytochrome b-c1 complex, complex III, CIII), resulting in different assemblies (supercomplex SCI(1)III(2)IV(1) and megacomplex MCI(2)III(2)IV(2)).

The protein localises to the mitochondrion inner membrane. It catalyses the reaction 4 Fe(II)-[cytochrome c] + O2 + 8 H(+)(in) = 4 Fe(III)-[cytochrome c] + 2 H2O + 4 H(+)(out). Functionally, component of the cytochrome c oxidase, the last enzyme in the mitochondrial electron transport chain which drives oxidative phosphorylation. The respiratory chain contains 3 multisubunit complexes succinate dehydrogenase (complex II, CII), ubiquinol-cytochrome c oxidoreductase (cytochrome b-c1 complex, complex III, CIII) and cytochrome c oxidase (complex IV, CIV), that cooperate to transfer electrons derived from NADH and succinate to molecular oxygen, creating an electrochemical gradient over the inner membrane that drives transmembrane transport and the ATP synthase. Cytochrome c oxidase is the component of the respiratory chain that catalyzes the reduction of oxygen to water. Electrons originating from reduced cytochrome c in the intermembrane space (IMS) are transferred via the dinuclear copper A center (CU(A)) of subunit 2 and heme A of subunit 1 to the active site in subunit 1, a binuclear center (BNC) formed by heme A3 and copper B (CU(B)). The BNC reduces molecular oxygen to 2 water molecules using 4 electrons from cytochrome c in the IMS and 4 protons from the mitochondrial matrix. The chain is Cytochrome c oxidase subunit 3 (MT-CO3) from Equus asinus (Donkey).